Reading from the N-terminus, the 386-residue chain is 2,3-diketo-5-methylthiopentyl-1-phosphate enolase (386 aa).

Lysine 85 functions as the Proton acceptor in the catalytic mechanism. Substrate is bound by residues lysine 131, 157-160 (KDDE), histidine 248, glycine 316, and 338-339 (GT). Mg(2+) contacts are provided by lysine 157, aspartate 159, and glutamate 160. An N6-carboxylysine modification is found at lysine 157.

Belongs to the RuBisCO large chain family. Type IV subfamily. In terms of assembly, homodimer. Mg(2+) serves as cofactor.

The catalysed reaction is 5-methylsulfanyl-2,3-dioxopentyl phosphate = 2-hydroxy-5-methylsulfanyl-3-oxopent-1-enyl phosphate. The protein operates within amino-acid biosynthesis; L-methionine biosynthesis via salvage pathway; L-methionine from S-methyl-5-thio-alpha-D-ribose 1-phosphate: step 3/6. In terms of biological role, catalyzes the enolization of 2,3-diketo-5-methylthiopentyl-1-phosphate (DK-MTP-1-P) into 2-hydroxy-3-keto-5-methylthiopentenyl-1-phosphate (HK-MTPenyl-1-P). This Microcystis aeruginosa protein is 2,3-diketo-5-methylthiopentyl-1-phosphate enolase (mtnW).